Here is a 215-residue protein sequence, read N- to C-terminus: MKTVLITAFEPFEGEAINPSWEAVKDLHQREVGGVRVVACRLSCVFDLSLDQLYRAIAEWQPEVVIAVGQAGGRADISVERVAININDARIADNRGNQPIDTPVVEKGPAAYFSTLPVKALVQALHVAGIPASVSQTAGTFVCNHVMYGLLHQLHQQGDVVRGGFVHIPYSPEQAARHPGEPSMPTPLVTAALEVMIKQLLVQQVDVAITGGALH.

Active-site residues include Glu-80, Cys-143, and His-167.

It belongs to the peptidase C15 family. Homotetramer.

The protein resides in the cytoplasm. The enzyme catalyses Release of an N-terminal pyroglutamyl group from a polypeptide, the second amino acid generally not being Pro.. Its function is as follows. Removes 5-oxoproline from various penultimate amino acid residues except L-proline. The protein is Pyrrolidone-carboxylate peptidase of Pectobacterium atrosepticum (strain SCRI 1043 / ATCC BAA-672) (Erwinia carotovora subsp. atroseptica).